A 452-amino-acid polypeptide reads, in one-letter code: Keratin, type I cytoskeletal 15 (452 aa).

The head stretch occupies residues 1-97 (MATTFLQTSS…GGDGGLLSGN (97 aa)). 5 positions are modified to phosphoserine: serine 15, serine 16, serine 28, serine 33, and serine 47. The segment at 98 to 133 (EKVTMQNLNDRLASYLDKVRALEQANTELEVKIRDW) is coil 1A. Residues 98–410 (EKVTMQNLND…NLLEGQDAKM (313 aa)) enclose the IF rod domain. Threonine 124 carries the phosphothreonine modification. Residues 134–152 (YQKQSPASPDRDYSHYFKT) form a linker 1 region. The interval 153–244 (MEEIRDKILA…KNHEEEMKEF (92 aa)) is coil 1B. The tract at residues 245 to 264 (SSQLAGQVNVEMDAAPGVDL) is linker 12. Positions 265–406 (TRMLAEMREQ…ATYRNLLEGQ (142 aa)) are coil 2. Residue lysine 293 forms a Glycyl lysine isopeptide (Lys-Gly) (interchain with G-Cter in SUMO2) linkage. Residues threonine 294 and threonine 316 each carry the phosphothreonine modification. The segment at 407-452 (DAKMAGIGVREGSSGGGGSSSSSSNFHISVEESVDGKVVSSRKREI) is tail. The tract at residues 413–452 (IGVREGSSGGGGSSSSSSNFHISVEESVDGKVVSSRKREI) is disordered. Residue lysine 443 forms a Glycyl lysine isopeptide (Lys-Gly) (interchain with G-Cter in SUMO1); alternate linkage. Residue lysine 443 forms a Glycyl lysine isopeptide (Lys-Gly) (interchain with G-Cter in SUMO2); alternate linkage.

The protein belongs to the intermediate filament family. Heterotetramer of two type I and two type II keratins. Forms a heterodimer with KRT14. Interacts with PLEC isoform 1C, when in a heterodimer with KRT14. Interacts with NOD2. Expressed strongly in the basal cell layer at the tips of rete-like prominences (RLPs) of adult dorsal tongue, outer root sheath (ORS) of hair follicle and skin epidermis (at protein level).

In terms of biological role, in the absence of KRT14, makes a bona fide, but ultrastructurally distinct keratin filament network with KRT5. The chain is Keratin, type I cytoskeletal 15 (Krt15) from Mus musculus (Mouse).